The following is a 444-amino-acid chain: F-box protein At1g53790 (444 aa).

The region spanning V76–M125 is the F-box domain.

The sequence is that of F-box protein At1g53790 from Arabidopsis thaliana (Mouse-ear cress).